The chain runs to 225 residues: Protein-L-isoaspartate O-methyltransferase (225 aa).

Residue Ser-75 is part of the active site.

It belongs to the methyltransferase superfamily. L-isoaspartyl/D-aspartyl protein methyltransferase family.

The protein resides in the cytoplasm. It catalyses the reaction [protein]-L-isoaspartate + S-adenosyl-L-methionine = [protein]-L-isoaspartate alpha-methyl ester + S-adenosyl-L-homocysteine. In terms of biological role, catalyzes the methyl esterification of L-isoaspartyl residues in peptides and proteins that result from spontaneous decomposition of normal L-aspartyl and L-asparaginyl residues. It plays a role in the repair and/or degradation of damaged proteins. The sequence is that of Protein-L-isoaspartate O-methyltransferase from Xanthomonas campestris pv. campestris (strain 8004).